The sequence spans 75 residues: Small ribosomal subunit protein bS18 (75 aa).

It belongs to the bacterial ribosomal protein bS18 family. As to quaternary structure, part of the 30S ribosomal subunit. Forms a tight heterodimer with protein bS6.

Functionally, binds as a heterodimer with protein bS6 to the central domain of the 16S rRNA, where it helps stabilize the platform of the 30S subunit. This is Small ribosomal subunit protein bS18 from Wigglesworthia glossinidia brevipalpis.